Reading from the N-terminus, the 416-residue chain is Glutamyl-tRNA reductase (416 aa).

Substrate-binding positions include 49–52, Ser-105, 110–112, and Gln-116; these read TCNR and EPQ. Cys-50 acts as the Nucleophile in catalysis. 185–190 is an NADP(+) binding site; that stretch reads GAGETI.

The protein belongs to the glutamyl-tRNA reductase family. In terms of assembly, homodimer.

It carries out the reaction (S)-4-amino-5-oxopentanoate + tRNA(Glu) + NADP(+) = L-glutamyl-tRNA(Glu) + NADPH + H(+). The protein operates within porphyrin-containing compound metabolism; protoporphyrin-IX biosynthesis; 5-aminolevulinate from L-glutamyl-tRNA(Glu): step 1/2. In terms of biological role, catalyzes the NADPH-dependent reduction of glutamyl-tRNA(Glu) to glutamate 1-semialdehyde (GSA). This chain is Glutamyl-tRNA reductase, found in Shewanella halifaxensis (strain HAW-EB4).